Consider the following 186-residue polypeptide: Ribosome maturation factor RimM (186 aa).

The PRC barrel domain occupies 103-174; it reads PEEYHYSDLI…ELQVQPPPGL (72 aa).

Belongs to the RimM family. Binds ribosomal protein uS19.

The protein localises to the cytoplasm. In terms of biological role, an accessory protein needed during the final step in the assembly of 30S ribosomal subunit, possibly for assembly of the head region. Essential for efficient processing of 16S rRNA. May be needed both before and after RbfA during the maturation of 16S rRNA. It has affinity for free ribosomal 30S subunits but not for 70S ribosomes. The polypeptide is Ribosome maturation factor RimM (Synechococcus sp. (strain JA-3-3Ab) (Cyanobacteria bacterium Yellowstone A-Prime)).